A 294-amino-acid chain; its full sequence is Ribosomal protein L11 methyltransferase (294 aa).

S-adenosyl-L-methionine is bound by residues T144, G165, D187, and N229.

This sequence belongs to the methyltransferase superfamily. PrmA family.

It localises to the cytoplasm. The catalysed reaction is L-lysyl-[protein] + 3 S-adenosyl-L-methionine = N(6),N(6),N(6)-trimethyl-L-lysyl-[protein] + 3 S-adenosyl-L-homocysteine + 3 H(+). Its function is as follows. Methylates ribosomal protein L11. This is Ribosomal protein L11 methyltransferase from Pseudomonas aeruginosa (strain LESB58).